A 446-amino-acid chain; its full sequence is AP-2 complex subunit mu (446 aa).

3 positions are modified to phosphoserine: serine 145, serine 151, and serine 152. At threonine 157 the chain carries Phosphothreonine. The 269-residue stretch at 177-445 folds into the MHD domain; sequence KNSIYIDIVE…STRAGTCEIR (269 aa).

Belongs to the adaptor complexes medium subunit family. In terms of assembly, adaptor protein complex 2 (AP-2) is a heterotetramer composed of two large adaptins (alpha-type subunit apl3 and beta-type subunit apl1), a medium chain (mu-type subunit apm4) and a small adaptin (sigma-type subunit aps2).

It localises to the cell membrane. Its subcellular location is the membrane. The protein resides in the coated pit. Functionally, component of the adaptor complexes which link clathrin to receptors in coated vesicles. Clathrin-associated protein complexes are believed to interact with the cytoplasmic tails of membrane proteins, leading to their selection and concentration. AP50 is a subunit of the plasma membrane adaptor (Potential). This is AP-2 complex subunit mu (apm4) from Schizosaccharomyces pombe (strain 972 / ATCC 24843) (Fission yeast).